We begin with the raw amino-acid sequence, 148 residues long: MQRITITIEDDLLAEIDAAAAARGYQNRSEIIRDLARAGLQQTSEDTAQTGPCVAGLVYVYDHAARDLSKRLVQEFHGHHDLALATLHVHLDDNNCMEMTALRGAADEVRHFADHIIAERGVRYGRVVMIPTGEGKPAKARKHGHRHE.

Ni(2+) contacts are provided by H77, H88, H90, and C96.

Belongs to the transcriptional regulatory CopG/NikR family. Ni(2+) serves as cofactor.

Its function is as follows. Transcriptional regulator. The protein is Putative nickel-responsive regulator of Bradyrhizobium diazoefficiens (strain JCM 10833 / BCRC 13528 / IAM 13628 / NBRC 14792 / USDA 110).